The following is a 298-amino-acid chain: Nucleotide-binding protein Csal_2229 (298 aa).

8 to 15 contributes to the ATP binding site; the sequence is GRSGSGKS. 59-62 lines the GTP pocket; sequence DARN.

It belongs to the RapZ-like family.

Functionally, displays ATPase and GTPase activities. In Chromohalobacter salexigens (strain ATCC BAA-138 / DSM 3043 / CIP 106854 / NCIMB 13768 / 1H11), this protein is Nucleotide-binding protein Csal_2229.